Consider the following 286-residue polypeptide: MIINHNMSAMFAQRTLGHTNVQVGKGIEKLSSGYRINRAGDDASGLAVSEKMRSQIRGLNQASTNASNGVNFIQVTEAYLQETTDIMQRIRELAIQAANGIYSAEDRMQIQVEVSQLVAEVDRIASSAQFNGMNLLTGRFSRTEGENVIGGSMWFHIGANMDQRMRVYIGTMTAVALGVRNGVDESIMSIETADSANKSIGTIDAALKRINKQRADLGGYQNRMEYTVVGLDIAAENLQAAESRIRDANIAKQMVEYTKNQVLTQSGTAMLAQANTSAQSILSILR.

The interval 231–286 (LDIAAENLQAAESRIRDANIAKQMVEYTKNQVLTQSGTAMLAQANTSAQSILSILR) is required for interaction with FliW.

This sequence belongs to the bacterial flagellin family. In terms of assembly, the flagellum consists of an outer layer composed of repeating units of FlaA around a core that contains several antigenically related polypeptides. Interacts via its C-terminus with FliW; a synthetic peptide of residues 229-247 partially blocks binding to FliW.

It is found in the periplasmic flagellum. The protein resides in the periplasm. Functionally, component of the core of the flagella. In Treponema pallidum (strain Nichols), this protein is Flagellin FlaB1 (flaB1).